The following is a 294-amino-acid chain: MRISLNKYKIFSNAKINIGLNVFQKESDGYHNIDSIMAPIDLSDEMDVTFYSDLGDLKIECSDKSIPTDERNILYKTYKIFFEESKKEKEKIDIILKKNIPSEAGLGGGSSNAGFFLKLLNKHYGNVYNEKELEKLAMRVGSDVPFFIKNKTARVGGKGNRVDLVENNLKDSIILIKPLDFGVSTKEAYESFDNLKEVKYADFDKIIKNLKEGNRIALESNIENSLEQGILETDTNIKMLKMTLNSVVSGKKFFMSGSGSTYYTFVTELEKSQIETRLKTFVDNVKIIICKTIN.

Lysine 15 is an active-site residue. ATP is bound at residue 101 to 111 (PSEAGLGGGSS). The active site involves aspartate 143.

The protein belongs to the GHMP kinase family. IspE subfamily.

It catalyses the reaction 4-CDP-2-C-methyl-D-erythritol + ATP = 4-CDP-2-C-methyl-D-erythritol 2-phosphate + ADP + H(+). It participates in isoprenoid biosynthesis; isopentenyl diphosphate biosynthesis via DXP pathway; isopentenyl diphosphate from 1-deoxy-D-xylulose 5-phosphate: step 3/6. Its function is as follows. Catalyzes the phosphorylation of the position 2 hydroxy group of 4-diphosphocytidyl-2C-methyl-D-erythritol. The chain is 4-diphosphocytidyl-2-C-methyl-D-erythritol kinase from Fusobacterium nucleatum subsp. nucleatum (strain ATCC 25586 / DSM 15643 / BCRC 10681 / CIP 101130 / JCM 8532 / KCTC 2640 / LMG 13131 / VPI 4355).